The chain runs to 335 residues: Matrix protein (335 aa).

The protein belongs to the morbillivirus/respirovirus/rubulavirus M protein family.

It localises to the virion. In terms of biological role, the M protein has a crucial role in virus assembly and interacts with the RNP complex as well as with the viral membrane. The polypeptide is Matrix protein (M) (Ailuropoda melanoleuca (Giant panda)).